Here is a 615-residue protein sequence, read N- to C-terminus: Mitochondrial distribution and morphology protein 34 (615 aa).

In terms of domain architecture, SMP-LTD spans 1–195; sequence MAFNFNWSPL…LPAIIHRLSL (195 aa). Disordered regions lie at residues 293 to 313, 346 to 566, and 596 to 615; these read SDKP…RTSS, ATTG…PQPD, and PAFW…YEPR. Positions 301–313 are enriched in polar residues; that stretch reads TPASTPNLHRTSS. A compositionally biased stretch (low complexity) spans 346–355; sequence ATTGLSLGSG. A compositionally biased stretch (basic residues) spans 356-367; that stretch reads RHSKAGRKKKMR. 3 stretches are compositionally biased toward polar residues: residues 384 to 403, 435 to 446, and 457 to 499; these read IGST…TRTP, DATTSARASESS, and VTAQ…YSSR. A compositionally biased stretch (low complexity) spans 517-557; the sequence is QQQQFQQQQQQQQQQQQQQQQQQQQQQQQQQQQQQQQQQQQ. Over residues 596 to 606 the composition is skewed to basic and acidic residues; the sequence is PAFWEDSHQHD.

Belongs to the MDM34 family. As to quaternary structure, component of the ER-mitochondria encounter structure (ERMES) or MDM complex, composed of mmm-1, mdm10, mdm12 and mdm34.

It localises to the mitochondrion outer membrane. In terms of biological role, component of the ERMES/MDM complex, which serves as a molecular tether to connect the endoplasmic reticulum (ER) and mitochondria. Components of this complex are involved in the control of mitochondrial shape and protein biogenesis, and function in nonvesicular lipid trafficking between the ER and mitochondria. Mdm34 is required for the interaction of the ER-resident membrane protein mmm-1 and the outer mitochondrial membrane-resident beta-barrel protein mdm10. The sequence is that of Mitochondrial distribution and morphology protein 34 from Neurospora crassa (strain ATCC 24698 / 74-OR23-1A / CBS 708.71 / DSM 1257 / FGSC 987).